The following is a 393-amino-acid chain: uncharacterized protein (393 aa).

Over 1–17 the chain is Cytoplasmic; sequence MVSKDQTSFNKRWTLGL. A helical transmembrane segment spans residues 18–38; that stretch reads LMLGLVIILWVLSSFLINLIF. The Vacuolar portion of the chain corresponds to 39-46; sequence EDDSYRKP. The helical transmembrane segment at 47–67 threads the bilayer; it reads FFITYTNTAAFIFYLFPTAKA. The Cytoplasmic segment spans residues 68-132; that stretch reads VVVNYKDTGR…LYETIKLSAE (65 aa). Position 93 is a phosphoserine (S93). The helical transmembrane segment at 133-153 threads the bilayer; sequence FCILWFTANLVTNASLAFTSV. The Vacuolar segment spans residues 154 to 156; it reads ASQ. The chain crosses the membrane as a helical span at residues 157–176; that stretch reads TILSTTSSFFTLFIGAICHV. Residues 177-182 are Cytoplasmic-facing; it reads ESLSKS. Residues 183 to 200 traverse the membrane as a helical segment; sequence KVLGSFISFVGIIMVTKS. Topologically, residues 201–219 are vacuolar; sequence DSHQRYQRHIADVSGDDND. The chain crosses the membrane as a helical span at residues 220 to 240; the sequence is AVQVLIGNLLALAGAVLYGVY. The Cytoplasmic segment spans residues 241 to 257; the sequence is STLLKREVGDETRVNMK. A helical transmembrane segment spans residues 258–278; that stretch reads IFFGFVGLFNLLFLWPSLIVL. The Vacuolar portion of the chain corresponds to 279–292; sequence DFFGWEPFSLPKDP. Residues 293–313 form a helical membrane-spanning segment; that stretch reads KVVVIIFVNCLITFVSDFCWA. The Cytoplasmic segment spans residues 314–321; the sequence is KAMLLTSP. The chain crosses the membrane as a helical span at residues 322–342; that stretch reads LTVTVGLSITIPLAMFGDVIF. Residues 343-345 lie on the Vacuolar side of the membrane; sequence KHK. Residues 346 to 366 traverse the membrane as a helical segment; that stretch reads TMSALYLFGATLILGSFFIIN. The Cytoplasmic portion of the chain corresponds to 367 to 393; sequence KSSEEEHFENSITASNYESVEVPAANN.

It belongs to the TPT transporter family.

It is found in the vacuole membrane. This is an uncharacterized protein from Saccharomyces cerevisiae (strain ATCC 204508 / S288c) (Baker's yeast).